The sequence spans 339 residues: Ketol-acid reductoisomerase (NADP(+)) (339 aa).

The 182-residue stretch at 1-182 folds into the KARI N-terminal Rossmann domain; that stretch reads MRVYYDRDAD…GGGRAGIIET (182 aa). NADP(+)-binding positions include 24 to 27, arginine 48, serine 51, threonine 53, and 83 to 86; these read YGSQ and DELQ. The active site involves histidine 108. Glycine 134 is an NADP(+) binding site. Residues 183–328 enclose the KARI C-terminal knotted domain; sequence TFREECETDL…ARLREMMPWI (146 aa). The Mg(2+) site is built by aspartate 191, glutamate 195, glutamate 227, and glutamate 231. Serine 252 is a binding site for substrate.

Belongs to the ketol-acid reductoisomerase family. Mg(2+) serves as cofactor.

It carries out the reaction (2R)-2,3-dihydroxy-3-methylbutanoate + NADP(+) = (2S)-2-acetolactate + NADPH + H(+). It catalyses the reaction (2R,3R)-2,3-dihydroxy-3-methylpentanoate + NADP(+) = (S)-2-ethyl-2-hydroxy-3-oxobutanoate + NADPH + H(+). It functions in the pathway amino-acid biosynthesis; L-isoleucine biosynthesis; L-isoleucine from 2-oxobutanoate: step 2/4. The protein operates within amino-acid biosynthesis; L-valine biosynthesis; L-valine from pyruvate: step 2/4. In terms of biological role, involved in the biosynthesis of branched-chain amino acids (BCAA). Catalyzes an alkyl-migration followed by a ketol-acid reduction of (S)-2-acetolactate (S2AL) to yield (R)-2,3-dihydroxy-isovalerate. In the isomerase reaction, S2AL is rearranged via a Mg-dependent methyl migration to produce 3-hydroxy-3-methyl-2-ketobutyrate (HMKB). In the reductase reaction, this 2-ketoacid undergoes a metal-dependent reduction by NADPH to yield (R)-2,3-dihydroxy-isovalerate. The protein is Ketol-acid reductoisomerase (NADP(+)) of Parvibaculum lavamentivorans (strain DS-1 / DSM 13023 / NCIMB 13966).